The chain runs to 432 residues: Peptidase B (432 aa).

Mn(2+) is bound by residues K196 and D201. The active site involves K208. Mn(2+) is bound by residues D219, D278, and E280. R282 is an active-site residue.

This sequence belongs to the peptidase M17 family. Homohexamer. Mn(2+) serves as cofactor.

It localises to the cytoplasm. It catalyses the reaction Release of an N-terminal amino acid, Xaa, from a peptide or arylamide. Xaa is preferably Glu or Asp but may be other amino acids, including Leu, Met, His, Cys and Gln.. Functionally, probably plays an important role in intracellular peptide degradation. This chain is Peptidase B, found in Vibrio parahaemolyticus serotype O3:K6 (strain RIMD 2210633).